The sequence spans 342 residues: D-erythrose-4-phosphate dehydrogenase (342 aa).

11–12 (RV) is an NAD(+) binding site. Residues 153 to 155 (SCT), R199, 212 to 213 (TK), and R235 contribute to the substrate site. Catalysis depends on C154, which acts as the Nucleophile. Position 317 (N317) interacts with NAD(+).

Belongs to the glyceraldehyde-3-phosphate dehydrogenase family. Epd subfamily. As to quaternary structure, homotetramer.

The protein localises to the cytoplasm. It carries out the reaction D-erythrose 4-phosphate + NAD(+) + H2O = 4-phospho-D-erythronate + NADH + 2 H(+). Its pathway is cofactor biosynthesis; pyridoxine 5'-phosphate biosynthesis; pyridoxine 5'-phosphate from D-erythrose 4-phosphate: step 1/5. In terms of biological role, catalyzes the NAD-dependent conversion of D-erythrose 4-phosphate to 4-phosphoerythronate. The chain is D-erythrose-4-phosphate dehydrogenase from Pseudoalteromonas atlantica (strain T6c / ATCC BAA-1087).